The following is a 799-amino-acid chain: RasGAP-activating-like protein 1 (799 aa).

C2 domains follow at residues 1–105 (MAKS…DSWI) and 116–231 (VQGE…NGWF). 10 residues coordinate Ca(2+): aspartate 21, aspartate 27, aspartate 74, aspartate 76, aspartate 82, aspartate 149, aspartate 155, aspartate 202, aspartate 204, and aspartate 210. In terms of domain architecture, Ras-GAP spans 316–544 (GLAGPFLDYL…SRVRDFLDQL (229 aa)). The residue at position 400 (threonine 400) is a Phosphothreonine. In terms of domain architecture, PH spans 565–672 (TIVREGFLLK…WLSALRKASA (108 aa)). The segment at 674–710 (NPGKLVACHPGAFRSGRWTCCLQAERSAAGCSRTHSA) adopts a Btk-type zinc-finger fold. 4 residues coordinate Zn(2+): histidine 682, cysteine 693, cysteine 694, and cysteine 704.

The cofactor is Ca(2+).

Functionally, probable inhibitory regulator of the Ras-cyclic AMP pathway. Plays a role in dendrite formation by melanocytes. This Mus musculus (Mouse) protein is RasGAP-activating-like protein 1.